We begin with the raw amino-acid sequence, 875 residues long: Alanine--tRNA ligase (875 aa).

Zn(2+) contacts are provided by His-563, His-567, Cys-665, and His-669.

The protein belongs to the class-II aminoacyl-tRNA synthetase family. Zn(2+) serves as cofactor.

The protein resides in the cytoplasm. The catalysed reaction is tRNA(Ala) + L-alanine + ATP = L-alanyl-tRNA(Ala) + AMP + diphosphate. Catalyzes the attachment of alanine to tRNA(Ala) in a two-step reaction: alanine is first activated by ATP to form Ala-AMP and then transferred to the acceptor end of tRNA(Ala). Also edits incorrectly charged Ser-tRNA(Ala) and Gly-tRNA(Ala) via its editing domain. This chain is Alanine--tRNA ligase, found in Shewanella pealeana (strain ATCC 700345 / ANG-SQ1).